The sequence spans 98 residues: Hainantoxin-XVII (98 aa).

The N-terminal stretch at 1–40 (MTTVGVSLFRRSPEKITMKIATFLGLSFLLIASYVLICEA) is a signal peptide. A propeptide spanning residues 41–64 (QHPGFQELLILEENMRDPENSKER) is cleaved from the precursor. Cystine bridges form between cysteine 66-cysteine 81, cysteine 73-cysteine 85, and cysteine 80-cysteine 95.

This sequence belongs to the hainantoxin family. 17 subfamily. In terms of tissue distribution, expressed by the venom gland.

It localises to the secreted. Its function is as follows. Putative ion channel inhibitor. This Cyriopagopus hainanus (Chinese bird spider) protein is Hainantoxin-XVII.